Here is a 341-residue protein sequence, read N- to C-terminus: Fe-S cluster assembly protein DRE2 (341 aa).

The tract at residues Met1 to Leu157 is N-terminal SAM-like domain. The interval Leu151–Leu171 is disordered. A linker region spans residues Leu157–Ala204. The span at Ser161–Gln170 shows a compositional bias: acidic residues. [2Fe-2S] cluster-binding residues include Cys215, Cys227, Cys230, and Cys232. Residues Cys215 to Cys232 form a fe-S binding site A region. Cys304, Cys307, Cys315, and Cys318 together coordinate [4Fe-4S] cluster. Short sequence motifs (cx2C motif) lie at residues Cys304–Cys307 and Cys315–Cys318. The tract at residues Cys304 to Cys318 is fe-S binding site B.

The protein belongs to the anamorsin family. Monomer. Interacts with TAH18. Interacts with MIA40. The cofactor is [2Fe-2S] cluster. [4Fe-4S] cluster is required as a cofactor.

It localises to the cytoplasm. Its subcellular location is the mitochondrion intermembrane space. In terms of biological role, component of the cytosolic iron-sulfur (Fe-S) protein assembly (CIA) machinery required for the maturation of extramitochondrial Fe-S proteins. Part of an electron transfer chain functioning in an early step of cytosolic Fe-S biogenesis, facilitating the de novo assembly of a [4Fe-4S] cluster on the scaffold complex CFD1-NBP35. Electrons are transferred to DRE2 from NADPH via the FAD- and FMN-containing protein TAH18. TAH18-DRE2 are also required for the assembly of the diferric tyrosyl radical cofactor of ribonucleotide reductase (RNR), probably by providing electrons for reduction during radical cofactor maturation in the catalytic small subunit RNR2. The chain is Fe-S cluster assembly protein DRE2 from Komagataella phaffii (strain GS115 / ATCC 20864) (Yeast).